Consider the following 360-residue polypeptide: Inward rectifier potassium channel 13 (360 aa).

Topologically, residues 1 to 50 are cytoplasmic; it reads MDGSHCKVIAPLLTERHQRMVTKDGHSTLQMDGAQTGLAYLRDAWGILMD. A helical transmembrane segment spans residues 51-77; sequence MRWRWMMLVFSASFVIHWLVFAVLWYI. Over 78–105 the chain is Extracellular; the sequence is LAEMNGDLGLDHDAPPENHTICVKYITS. The helical; Pore-forming intramembrane region spans 106–122; sequence FTAAFSFSLETQLTIGY. The short motif at 119–124 is the Selectivity filter element; the sequence is TIGYGT. The Extracellular segment spans residues 123–131; that stretch reads GTMFPSGDC. The helical transmembrane segment at 132-157 threads the bilayer; it reads PSAIALLAIQMLLGLMLEAFITGAFV. The Cytoplasmic portion of the chain corresponds to 158–360; it reads AKIARPKNRA…FQISETGLTE (203 aa). Ser287 carries the phosphoserine modification.

The protein belongs to the inward rectifier-type potassium channel (TC 1.A.2.1) family. As to quaternary structure, homotetramer. Interacts with RAB28; the interaction may facilitate cone outer segments phagocytosis. Post-translationally, phosphorylation at Ser-287 by PKA increases them.

It localises to the membrane. It is found in the cell membrane. The catalysed reaction is K(+)(in) = K(+)(out). With respect to regulation, inhibited by Ba(2+) and Cs(+), although sensitivity to those inhibitors is much lower than in other Kir channels. Functionally, inward rectifier potassium channels are characterized by a greater tendency to allow potassium to flow into the cell rather than out of it. Their voltage dependence is regulated by the concentration of extracellular potassium; as external potassium is raised, the voltage range of the channel opening shifts to more positive voltages. The inward rectification is mainly due to the blockage of outward current by internal magnesium. KCNJ13 has a very low single channel conductance, low sensitivity to block by external barium and cesium, and no dependence of its inward rectification properties on the internal blocking particle magnesium. The chain is Inward rectifier potassium channel 13 (KCNJ13) from Bos taurus (Bovine).